Reading from the N-terminus, the 237-residue chain is Ribose-5-phosphate isomerase A (237 aa).

Substrate-binding positions include 28 to 31 (SGST), 83 to 86 (DGAD), and 97 to 100 (KGRG). Residue Glu106 is the Proton acceptor of the active site. Lys124 is a binding site for substrate.

Belongs to the ribose 5-phosphate isomerase family. As to quaternary structure, homodimer.

The catalysed reaction is aldehydo-D-ribose 5-phosphate = D-ribulose 5-phosphate. It participates in carbohydrate degradation; pentose phosphate pathway; D-ribose 5-phosphate from D-ribulose 5-phosphate (non-oxidative stage): step 1/1. Its function is as follows. Catalyzes the reversible conversion of ribose-5-phosphate to ribulose 5-phosphate. The chain is Ribose-5-phosphate isomerase A from Thermomicrobium roseum (strain ATCC 27502 / DSM 5159 / P-2).